The chain runs to 186 residues: MGRYSRESDNVAKSCKARGPNLRVHFKNTHETAQAIKRMPLRRAQRYLKAVIDQKECVPFRRFNGGVGRCAQAKQWKTTQGRWPKKSAEFLLQLLRNAEANADCKGLDADRLVVHHIQVNRAQCLRRRTYRAHGRINPYMSSPCHVEVILTEKEELVSKATDDEPAKKKLSKKKLQRQKEKMLRSE.

Ser-158 is subject to Phosphoserine. Positions 159–186 are disordered; it reads KATDDEPAKKKLSKKKLQRQKEKMLRSE. Phosphothreonine is present on Thr-161. The span at 177–186 shows a compositional bias: basic and acidic residues; that stretch reads RQKEKMLRSE.

This sequence belongs to the universal ribosomal protein uL22 family.

The protein is Large ribosomal subunit protein uL22 (RpL17) of Drosophila melanogaster (Fruit fly).